The sequence spans 193 residues: 7-methyl-GTP pyrophosphatase (193 aa).

The active-site Proton acceptor is the Asp70.

Belongs to the Maf family. YceF subfamily. It depends on a divalent metal cation as a cofactor.

It is found in the cytoplasm. The enzyme catalyses N(7)-methyl-GTP + H2O = N(7)-methyl-GMP + diphosphate + H(+). Nucleoside triphosphate pyrophosphatase that hydrolyzes 7-methyl-GTP (m(7)GTP). May have a dual role in cell division arrest and in preventing the incorporation of modified nucleotides into cellular nucleic acids. The polypeptide is 7-methyl-GTP pyrophosphatase (Aliivibrio fischeri (strain ATCC 700601 / ES114) (Vibrio fischeri)).